The primary structure comprises 342 residues: N-acetyl-gamma-glutamyl-phosphate reductase (342 aa).

Cys149 is an active-site residue.

The protein belongs to the NAGSA dehydrogenase family. Type 1 subfamily.

Its subcellular location is the cytoplasm. The enzyme catalyses N-acetyl-L-glutamate 5-semialdehyde + phosphate + NADP(+) = N-acetyl-L-glutamyl 5-phosphate + NADPH + H(+). It functions in the pathway amino-acid biosynthesis; L-arginine biosynthesis; N(2)-acetyl-L-ornithine from L-glutamate: step 3/4. Catalyzes the NADPH-dependent reduction of N-acetyl-5-glutamyl phosphate to yield N-acetyl-L-glutamate 5-semialdehyde. This chain is N-acetyl-gamma-glutamyl-phosphate reductase, found in Nitrosomonas eutropha (strain DSM 101675 / C91 / Nm57).